Here is a 126-residue protein sequence, read N- to C-terminus: Flagellar protein FliT (126 aa).

The interval 1–50 is required for homodimerization; it reads MVSPHRLLKDYQQLLSLSQKILHLAISGQWDTLVEQEIVYVQSVEGLVNT. The fliD binding stretch occupies residues 60–98; that stretch reads MRLHLRQILQEVMDNEAKVKQLLQKRMDELSSLMGQSLK.

Belongs to the FliT family. In terms of assembly, homodimer. Interacts with FliD and FlhC.

It is found in the cytoplasm. The protein localises to the cytosol. Functionally, dual-function protein that regulates the transcription of class 2 flagellar operons and that also acts as an export chaperone for the filament-capping protein FliD. As a transcriptional regulator, acts as an anti-FlhDC factor; it directly binds FlhC, thus inhibiting the binding of the FlhC/FlhD complex to class 2 promoters, resulting in decreased expression of class 2 flagellar operons. As a chaperone, effects FliD transition to the membrane by preventing its premature polymerization, and by directing it to the export apparatus. The chain is Flagellar protein FliT from Pectobacterium atrosepticum (strain SCRI 1043 / ATCC BAA-672) (Erwinia carotovora subsp. atroseptica).